An 86-amino-acid chain; its full sequence is Progonadoliberin-2 (86 aa).

Residues 1 to 24 (MVHICRLLVLMGMLLCLSAQFASS) form the signal peptide. The residue at position 25 (glutamine 25) is a Pyrrolidone carboxylic acid. Glycine amide is present on glycine 34.

Belongs to the GnRH family.

Its subcellular location is the secreted. Functionally, stimulates the secretion of gonadotropins. This Rutilus rutilus (Roach) protein is Progonadoliberin-2 (gnrh2).